The chain runs to 238 residues: Ribose-5-phosphate isomerase A (238 aa).

Residues 30 to 33 (SGST), 87 to 90 (DGAD), and 100 to 103 (KGGG) contribute to the substrate site. Glu109 (proton acceptor) is an active-site residue. A substrate-binding site is contributed by Lys127.

The protein belongs to the ribose 5-phosphate isomerase family. In terms of assembly, homodimer.

It catalyses the reaction aldehydo-D-ribose 5-phosphate = D-ribulose 5-phosphate. It participates in carbohydrate degradation; pentose phosphate pathway; D-ribose 5-phosphate from D-ribulose 5-phosphate (non-oxidative stage): step 1/1. Its function is as follows. Catalyzes the reversible conversion of ribose-5-phosphate to ribulose 5-phosphate. In Prochlorococcus marinus (strain MIT 9303), this protein is Ribose-5-phosphate isomerase A.